The chain runs to 109 residues: Staphostatin B (109 aa).

Residues 97-101 (IGTSR) form a binds to staphopain B region.

This sequence belongs to the protease inhibitor I57 (SspC) family. Forms a stable non-covalent complex with prematurely activated/folded SspB.

Its subcellular location is the cytoplasm. Specifically inhibits the cysteine protease staphopain B (SspB) by blocking the active site of the enzyme. Probably required to protect cytoplasmic proteins from being degraded by prematurely activated/folded prostaphopain B. Also involved in growth capacity, viability and bacterial morphology. The sequence is that of Staphostatin B (sspC) from Staphylococcus aureus (strain NCTC 8325 / PS 47).